The chain runs to 408 residues: Peptidase T (408 aa).

H78 serves as a coordination point for Zn(2+). Residue D80 is part of the active site. D140 is a binding site for Zn(2+). Catalysis depends on E173, which acts as the Proton acceptor. Residues E174, D196, and H379 each contribute to the Zn(2+) site.

The protein belongs to the peptidase M20B family. It depends on Zn(2+) as a cofactor.

It is found in the cytoplasm. It catalyses the reaction Release of the N-terminal residue from a tripeptide.. Its function is as follows. Cleaves the N-terminal amino acid of tripeptides. This chain is Peptidase T, found in Escherichia coli O6:K15:H31 (strain 536 / UPEC).